We begin with the raw amino-acid sequence, 267 residues long: 3-methyl-2-oxobutanoate hydroxymethyltransferase (267 aa).

Mg(2+) is bound by residues aspartate 46 and aspartate 85. 3-methyl-2-oxobutanoate-binding positions include 46-47 (DS), aspartate 85, and lysine 115. Mg(2+) is bound at residue glutamate 117. Residue glutamate 184 is the Proton acceptor of the active site.

This sequence belongs to the PanB family. Homodecamer; pentamer of dimers. Mg(2+) is required as a cofactor.

It localises to the cytoplasm. The enzyme catalyses 3-methyl-2-oxobutanoate + (6R)-5,10-methylene-5,6,7,8-tetrahydrofolate + H2O = 2-dehydropantoate + (6S)-5,6,7,8-tetrahydrofolate. Its pathway is cofactor biosynthesis; (R)-pantothenate biosynthesis; (R)-pantoate from 3-methyl-2-oxobutanoate: step 1/2. Catalyzes the reversible reaction in which hydroxymethyl group from 5,10-methylenetetrahydrofolate is transferred onto alpha-ketoisovalerate to form ketopantoate. The sequence is that of 3-methyl-2-oxobutanoate hydroxymethyltransferase from Geotalea uraniireducens (strain Rf4) (Geobacter uraniireducens).